The sequence spans 458 residues: MKLLPMDIPRVVIAGTSSKVGKTMISIGLMRLLVNRGYEVQPYKVGPDFIDPGFHHLATGRYSRNLDSFMLSRSAILETFIRNFRGADVAIIEGKTGLYDSSDAVSEKGSVAEVSKILKAPVVLVANVERLNRTAAAIILGYKLFDPDVLLKGVILNRVGSERHAGKVRTAVEKLAGVRVLGVVPRKKVKMPYRHLGLVTAYEREDMDELLDNIAEIVEKHVDVDKILEIAEKAPPLDSVFEDEKEDEEKKYVKIGVIRDQVFSFYYQDNLDELSKYAELVFVNSLTDKRLPDVDALYIGGGFPEVFAEGLEKNEKLRNEIYDFCQSGNPVYAECGGLMYLGESLETSEGEFEMVGFLPLKTKMYERFQAQGYSVYRTLKPCIIAKRNQKIVGHEFHYSRPTLTGKADFAFRVERGFGIDGRRDGILKENTLGCYIHVHFLSDKSIARRFVKKAMKKK.

Residues 254 to 445 enclose the GATase cobBQ-type domain; it reads KIGVIRDQVF…IHVHFLSDKS (192 aa). Catalysis depends on cysteine 335, which acts as the Nucleophile.

Belongs to the CobB/CbiA family. The cofactor is Mg(2+).

The catalysed reaction is cob(II)yrinate + 2 L-glutamine + 2 ATP + 2 H2O = cob(II)yrinate a,c diamide + 2 L-glutamate + 2 ADP + 2 phosphate + 2 H(+). It participates in cofactor biosynthesis; adenosylcobalamin biosynthesis; cob(II)yrinate a,c-diamide from sirohydrochlorin (anaerobic route): step 10/10. Catalyzes the ATP-dependent amidation of the two carboxylate groups at positions a and c of cobyrinate, using either L-glutamine or ammonia as the nitrogen source. This Archaeoglobus fulgidus (strain ATCC 49558 / DSM 4304 / JCM 9628 / NBRC 100126 / VC-16) protein is Cobyrinate a,c-diamide synthase.